Consider the following 387-residue polypeptide: Cytochrome b (387 aa).

Helical transmembrane passes span 32–52 (FGFF…LLAM), 76–98 (WLLR…VHML), 113–133 (LWVS…LGYV), 179–199 (FFSL…LHII), 225–245 (FTIK…AFVF), 290–310 (LGVL…FLTI), 325–345 (LFWS…QPAA), and 353–373 (LYST…IYMV). Positions 82 and 96 each coordinate heme b. Residues His183 and His197 each contribute to the heme b site.

It belongs to the cytochrome b family. In terms of assembly, the main subunits of complex b-c1 are: cytochrome b, cytochrome c1 and the Rieske protein. The cofactor is heme b.

It localises to the mitochondrion inner membrane. Functionally, component of the ubiquinol-cytochrome c reductase complex (complex III or cytochrome b-c1 complex) that is part of the mitochondrial respiratory chain. The b-c1 complex mediates electron transfer from ubiquinol to cytochrome c. Contributes to the generation of a proton gradient across the mitochondrial membrane that is then used for ATP synthesis. This is Cytochrome b (cytB) from Dictyostelium citrinum (Slime mold).